The primary structure comprises 519 residues: Bifunctional purine biosynthesis protein PurH (519 aa).

One can recognise an MGS-like domain in the interval 1–147 (MAKITRALIS…KNNHDVTVLV (147 aa)).

The protein belongs to the PurH family.

The catalysed reaction is (6R)-10-formyltetrahydrofolate + 5-amino-1-(5-phospho-beta-D-ribosyl)imidazole-4-carboxamide = 5-formamido-1-(5-phospho-D-ribosyl)imidazole-4-carboxamide + (6S)-5,6,7,8-tetrahydrofolate. It carries out the reaction IMP + H2O = 5-formamido-1-(5-phospho-D-ribosyl)imidazole-4-carboxamide. It participates in purine metabolism; IMP biosynthesis via de novo pathway; 5-formamido-1-(5-phospho-D-ribosyl)imidazole-4-carboxamide from 5-amino-1-(5-phospho-D-ribosyl)imidazole-4-carboxamide (10-formyl THF route): step 1/1. It functions in the pathway purine metabolism; IMP biosynthesis via de novo pathway; IMP from 5-formamido-1-(5-phospho-D-ribosyl)imidazole-4-carboxamide: step 1/1. In Trichlorobacter lovleyi (strain ATCC BAA-1151 / DSM 17278 / SZ) (Geobacter lovleyi), this protein is Bifunctional purine biosynthesis protein PurH.